We begin with the raw amino-acid sequence, 363 residues long: Protein RecA (363 aa).

77–84 (GPESSGKT) provides a ligand contact to ATP.

The protein belongs to the RecA family.

It is found in the cytoplasm. Functionally, can catalyze the hydrolysis of ATP in the presence of single-stranded DNA, the ATP-dependent uptake of single-stranded DNA by duplex DNA, and the ATP-dependent hybridization of homologous single-stranded DNAs. It interacts with LexA causing its activation and leading to its autocatalytic cleavage. This chain is Protein RecA, found in Agrobacterium fabrum (strain C58 / ATCC 33970) (Agrobacterium tumefaciens (strain C58)).